We begin with the raw amino-acid sequence, 91 residues long: MRHIGVFVGVLALALVLLVVEARSDAERGVCACPRIYMPVCGSNLKTYNNDCLLRCEINSDLGRANNLRKIADQACDNLTDNVNDFIPQEY.

Residues M1–A22 form the signal peptide. Residues D25–N78 enclose the Kazal-like domain. Disulfide bonds link C31-C56, C33-C52, and C41-C76. The N-linked (GlcNAc...) asparagine glycan is linked to N78.

As to quaternary structure, interacts with human PLG (plasmin). In terms of tissue distribution, female salivary gland. Female gut at 3 and 24 hours after blood feeding. Female carcass. Male tissues. Not detected in ovary and fat body at 3 and 24 hours after blood feeding.

Its subcellular location is the secreted. Its function is as follows. Anticoagulant protein that decreases host thrombin (F2) activity via an uncompetitive inhibition mechanism. Inhibits amidolytic activity of host plasmin (PLG). Inhibits amidolytic activity of host trypsin. Inhibits trypsin-like endogenous activity from gut of female mosquitoes 24 hours after feeding and weakly affects enzyme activity from gut 3 hours after feeding, suggesting a possible role as an inhibitor of endogenous proteases. (Microbial infection) Limits host plasmin-mediated enhancement of dengue virus type 2 infection in mosquito midgut. The sequence is that of Kazal-type trypsin inhibitor from Aedes aegypti (Yellowfever mosquito).